We begin with the raw amino-acid sequence, 853 residues long: DNA mismatch repair protein MutS (853 aa).

614–621 is an ATP binding site; sequence GPNMGGKS.

It belongs to the DNA mismatch repair MutS family.

Its function is as follows. This protein is involved in the repair of mismatches in DNA. It is possible that it carries out the mismatch recognition step. This protein has a weak ATPase activity. The sequence is that of DNA mismatch repair protein MutS from Klebsiella pneumoniae subsp. pneumoniae (strain ATCC 700721 / MGH 78578).